A 131-amino-acid polypeptide reads, in one-letter code: Arsenate reductase 2 (131 aa).

Catalysis depends on nucleophile residues Cys-10, Cys-82, and Cys-89. 2 cysteine pairs are disulfide-bonded: Cys-10/Cys-82 and Cys-82/Cys-89.

Belongs to the low molecular weight phosphotyrosine protein phosphatase family. Thioredoxin-coupled ArsC subfamily.

The protein resides in the cytoplasm. It carries out the reaction arsenate + [thioredoxin]-dithiol + H(+) = arsenite + [thioredoxin]-disulfide + H2O. In terms of biological role, catalyzes the reduction of arsenate [As(V)] to arsenite [As(III)]. The protein is Arsenate reductase 2 of Staphylococcus haemolyticus (strain JCSC1435).